The sequence spans 384 residues: 8-amino-7-oxononanoate synthase (384 aa).

Arg-21 is a binding site for substrate. A pyridoxal 5'-phosphate-binding site is contributed by 108–109; it reads GF. Position 133 (His-133) interacts with substrate. Positions 179, 207, and 233 each coordinate pyridoxal 5'-phosphate. The residue at position 236 (Lys-236) is an N6-(pyridoxal phosphate)lysine. Thr-352 contributes to the substrate binding site.

Belongs to the class-II pyridoxal-phosphate-dependent aminotransferase family. BioF subfamily. As to quaternary structure, homodimer. It depends on pyridoxal 5'-phosphate as a cofactor.

The enzyme catalyses 6-carboxyhexanoyl-[ACP] + L-alanine + H(+) = (8S)-8-amino-7-oxononanoate + holo-[ACP] + CO2. It participates in cofactor biosynthesis; biotin biosynthesis. Functionally, catalyzes the decarboxylative condensation of pimeloyl-[acyl-carrier protein] and L-alanine to produce 8-amino-7-oxononanoate (AON), [acyl-carrier protein], and carbon dioxide. In Escherichia fergusonii (strain ATCC 35469 / DSM 13698 / CCUG 18766 / IAM 14443 / JCM 21226 / LMG 7866 / NBRC 102419 / NCTC 12128 / CDC 0568-73), this protein is 8-amino-7-oxononanoate synthase.